Reading from the N-terminus, the 138-residue chain is Putative pre-16S rRNA nuclease (138 aa).

This sequence belongs to the YqgF nuclease family.

The protein localises to the cytoplasm. Functionally, could be a nuclease involved in processing of the 5'-end of pre-16S rRNA. This Carboxydothermus hydrogenoformans (strain ATCC BAA-161 / DSM 6008 / Z-2901) protein is Putative pre-16S rRNA nuclease.